Reading from the N-terminus, the 725-residue chain is Kinesin-like protein KIF2C (725 aa).

Ala-2 carries the post-translational modification N-acetylalanine. The interval 2-254 is globular; it reads AMDSSLQARL…CHPLTMTDPI (253 aa). Phosphoserine is present on residues Ser-6 and Ser-22. The disordered stretch occupies residues 89–116; that stretch reads QKQKRRSVNSKIPAPKESLRSRSTRMST. The residue at position 95 (Ser-95) is a Phosphoserine; by AURKB. The Microtubule tip localization signal signature appears at 98–101; sequence SKIP. Phosphoserine occurs at positions 106, 109, 111, 115, 166, 175, 187, and 192. The tract at residues 207-238 is negative regulator of microtubule-binding; that stretch reads EKKAQNSEMRMKRAQEYDSSFPNWEFARMIKE. The 331-residue stretch at 258–588 folds into the Kinesin motor domain; it reads RICVCVRKRP…LRYADRVKEL (331 aa). Residues Arg-264 and 348–355 each bind ATP; that span reads GQTGSGKT. Positions 415–418 match the Nuclear localization signal motif; that stretch reads KKAK. A phosphoserine mark is found at Ser-519, Ser-621, and Ser-633. Residues 618-658 are a coiled coil; the sequence is GNLSKEEEELSSQMSSFNEAMTQIRELEEKAMEELKEIIQQ.

Belongs to the TRAFAC class myosin-kinesin ATPase superfamily. Kinesin family. MCAK/KIF2 subfamily. In terms of assembly, interacts with CENPH. Interacts with MTUS2/TIP150; the interaction is direct. Interacts with MAPRE1; the interaction is direct, regulated by phosphorylation and is probably required for targeting to growing microtubule plus ends. Interacts with KIF18B at microtubule tips; this interaction increases the affinity of both partners for microtubule plus ends and is required for robust microtubule depolymerization. Phosphorylation by AURKA or AURKB strongly reduces KIF18B-binding. Phosphorylation by AURKB, regulates association with centromeres and kinetochores and the microtubule depolymerization activity. In terms of processing, ubiquitinated. Expressed at high levels in thymus and testis, at low levels in small intestine, the mucosal lining of colon, and placenta, and at very low levels in spleen and ovary; expression is not detected in prostate, peripheral blood Leukocytes, heart, brain, lung, liver, skeletal muscle, kidney or pancreas. Isoform 2 is testis-specific.

It is found in the cytoplasm. Its subcellular location is the cytoskeleton. It localises to the nucleus. The protein resides in the chromosome. The protein localises to the centromere. It is found in the kinetochore. Functionally, in complex with KIF18B, constitutes the major microtubule plus-end depolymerizing activity in mitotic cells. Regulates the turnover of microtubules at the kinetochore and functions in chromosome segregation during mitosis. Plays a role in chromosome congression and is required for the lateral to end-on conversion of the chromosome-microtubule attachment. This Homo sapiens (Human) protein is Kinesin-like protein KIF2C (KIF2C).